The sequence spans 151 residues: Sec-independent protein translocase protein TatB (151 aa).

Residues 1 to 21 traverse the membrane as a helical segment; that stretch reads MFDVSFTELMVIGVIALVVIG. The interval 66-151 is disordered; that stretch reads MDETARSMQT…DKTPPTGSAT (86 aa). Basic and acidic residues predominate over residues 93–103; sequence AELDDTARDAS. Low complexity-rich tracts occupy residues 109-122 and 133-151; these read ADAP…VASD and APPA…GSAT.

The protein belongs to the TatB family. As to quaternary structure, the Tat system comprises two distinct complexes: a TatABC complex, containing multiple copies of TatA, TatB and TatC subunits, and a separate TatA complex, containing only TatA subunits. Substrates initially bind to the TatABC complex, which probably triggers association of the separate TatA complex to form the active translocon.

Its subcellular location is the cell inner membrane. In terms of biological role, part of the twin-arginine translocation (Tat) system that transports large folded proteins containing a characteristic twin-arginine motif in their signal peptide across membranes. Together with TatC, TatB is part of a receptor directly interacting with Tat signal peptides. TatB may form an oligomeric binding site that transiently accommodates folded Tat precursor proteins before their translocation. The protein is Sec-independent protein translocase protein TatB of Bordetella parapertussis (strain 12822 / ATCC BAA-587 / NCTC 13253).